Reading from the N-terminus, the 165-residue chain is Putative 1,2-phenylacetyl-CoA epoxidase, subunit D (165 aa).

In terms of assembly, monomer.

Its pathway is aromatic compound metabolism; phenylacetate degradation. Functionally, possible component of 1,2-phenylacetyl-CoA epoxidase multicomponent enzyme system which catalyzes the reduction of phenylacetyl-CoA (PA-CoA) to form 1,2-epoxyphenylacetyl-CoA. The subunit D may have a function related to the maturation of the monooxygenase complex, rather than direct involvement in catalysis. PaaD could assist either in maturation of PaaE or PaaA. The polypeptide is Putative 1,2-phenylacetyl-CoA epoxidase, subunit D (paaD) (Escherichia coli (strain K12)).